A 201-amino-acid chain; its full sequence is Peroxiredoxin 2 (201 aa).

A Thioredoxin domain is found at 3–156 (VYLGKRAPDF…ILRSVKALQA (154 aa)). C44 acts as the Cysteine sulfenic acid (-SOH) intermediate in catalysis. Position 119 (R119) interacts with substrate.

The protein belongs to the peroxiredoxin family. Prx6 subfamily. In terms of assembly, homodecamer. Pentamer of dimers that assemble into a ring structure.

It is found in the cytoplasm. The catalysed reaction is a hydroperoxide + [thioredoxin]-dithiol = an alcohol + [thioredoxin]-disulfide + H2O. Thiol-specific peroxidase that catalyzes the reduction of hydrogen peroxide and organic hydroperoxides to water and alcohols, respectively. Plays a role in cell protection against oxidative stress by detoxifying peroxides. This chain is Peroxiredoxin 2, found in Picrophilus torridus (strain ATCC 700027 / DSM 9790 / JCM 10055 / NBRC 100828 / KAW 2/3).